Reading from the N-terminus, the 547-residue chain is MANFVLPPIHDNSDGSWGPSTSTLPAQFKDIPYAPFSKSDKITRIADWHDPQAEAAAGTRTARTVQSGGRRTAYGAAEGTVFGFVHDEDEKSFSLVDSGVRVGARGKAPIRGRSVRGVASARGARGRGGQRGGFSTRGGRGGARGGYGDWNKPQRTRDSSVTIGPEWEVLEEIDFNRLSKLSLSVEDPEDLASYGTVQAYDKTFDRINTRNEKPLEIVNRVRYNPSTSDDPIISQYAEKKEAQIFATDSILAVLMCAGRSVNSWDIIIEHRNGQVFFDKRESGPLDYITVNENAADPPVDSDDVSNINSAGSLSLEATYISHNFSSQVSANSKSKAYTPNPNPFYSPEVESEPPASTLYKYRKFDLSIDEEEQFSVILRTEADAYLGKKEVLVTVKALNEYDPRVQGGSGKPLDWRKNLDTQKGAILASEMKNNSAKFARWAIQSILAGVEQMKMGYISRANPRDAQRHTIVGVQSFKPLDFARQMNVSLANGWGIVRTIADLVLKQPEGKFVLVKDPNNPLVRLYKVPDDTFEAGAEEEEEEQDEE.

Disordered stretches follow at residues methionine 1–serine 22 and serine 114–serine 159. Gly residues predominate over residues glycine 126 to glycine 148. Residues proline 284 to proline 298 form an RNA gate region.

This sequence belongs to the eIF-3 subunit D family. Component of the eukaryotic translation initiation factor 3 (eIF-3) complex.

Its subcellular location is the cytoplasm. Functionally, mRNA cap-binding component of the eukaryotic translation initiation factor 3 (eIF-3) complex, which is involved in protein synthesis of a specialized repertoire of mRNAs and, together with other initiation factors, stimulates binding of mRNA and methionyl-tRNAi to the 40S ribosome. The eIF-3 complex specifically targets and initiates translation of a subset of mRNAs involved in cell proliferation. In the eIF-3 complex, eif3d specifically recognizes and binds the 7-methylguanosine cap of a subset of mRNAs. The protein is Eukaryotic translation initiation factor 3 subunit D of Cryptococcus neoformans var. neoformans serotype D (strain B-3501A) (Filobasidiella neoformans).